A 95-amino-acid chain; its full sequence is UPF0045 protein CPE1503 (95 aa).

This sequence belongs to the UPF0045 family.

The chain is UPF0045 protein CPE1503 from Clostridium perfringens (strain 13 / Type A).